The chain runs to 508 residues: GMP synthase [glutamine-hydrolyzing] (508 aa).

Positions 1-189 (MILVLDFGSQ…ALLVCGCEKT (189 aa)) constitute a Glutamine amidotransferase type-1 domain. The active-site Nucleophile is Cys78. Residues His163 and Glu165 contribute to the active site. One can recognise a GMPS ATP-PPase domain in the interval 190 to 383 (WGMQHFAQRE…LGVSQDFLMH (194 aa)). 217 to 223 (SGGVDST) serves as a coordination point for ATP.

As to quaternary structure, homodimer.

It carries out the reaction XMP + L-glutamine + ATP + H2O = GMP + L-glutamate + AMP + diphosphate + 2 H(+). Its pathway is purine metabolism; GMP biosynthesis; GMP from XMP (L-Gln route): step 1/1. Functionally, catalyzes the synthesis of GMP from XMP. The protein is GMP synthase [glutamine-hydrolyzing] of Helicobacter pylori (strain G27).